Reading from the N-terminus, the 281-residue chain is E3 ubiquitin-protein ligase MARCHF5 (281 aa).

The RING-CH-type zinc finger occupies 9-78 (LPQTMDRSCW…PQCNAEYLIV (70 aa)). 8 residues coordinate Zn(2+): Cys17, Cys20, Cys36, Cys38, His46, Cys49, Cys68, and Cys71. 4 helical membrane passes run 102–122 (FAAA…YGAV), 142–162 (PLFL…GKMI), 212–232 (ILCG…LMFS), and 241–261 (TILG…YFKQ).

It localises to the mitochondrion outer membrane. The protein localises to the endoplasmic reticulum membrane. It catalyses the reaction S-ubiquitinyl-[E2 ubiquitin-conjugating enzyme]-L-cysteine + [acceptor protein]-L-lysine = [E2 ubiquitin-conjugating enzyme]-L-cysteine + N(6)-ubiquitinyl-[acceptor protein]-L-lysine.. It participates in protein modification; protein ubiquitination. Mitochondrial E3 ubiquitin-protein ligase that plays a crucial role in the control of mitochondrial morphology by acting as a positive regulator of mitochondrial fission. May play a role in the prevention of cell senescence acting as a regulator of mitochondrial quality control. The polypeptide is E3 ubiquitin-protein ligase MARCHF5 (MARCHF5) (Gallus gallus (Chicken)).